The primary structure comprises 155 residues: Ribosome maturation factor RimP (155 aa).

Belongs to the RimP family.

Its subcellular location is the cytoplasm. In terms of biological role, required for maturation of 30S ribosomal subunits. In Listeria monocytogenes serotype 4b (strain CLIP80459), this protein is Ribosome maturation factor RimP.